We begin with the raw amino-acid sequence, 43 residues long: Protein PsbN (43 aa).

A helical membrane pass occupies residues 7–27; the sequence is VAIFISGLLVSFTGYALYTAF.

This sequence belongs to the PsbN family.

Its subcellular location is the plastid. It is found in the chloroplast thylakoid membrane. Its function is as follows. May play a role in photosystem I and II biogenesis. The chain is Protein PsbN from Daucus carota (Wild carrot).